The primary structure comprises 1384 residues: ABC transporter C family member 2 (1384 aa).

One can recognise an ABC transmembrane type-1 1 domain in the interval 104–388; it reads NKISVATKIF…LPEAIHRALS (285 aa). 5 helical membrane-spanning segments follow: residues 112 to 132, 140 to 160, 226 to 246, 247 to 267, and 333 to 353; these read IFVA…IYYI, TFKF…SLTL, IFVF…IVGL, SGLV…FLST, and MITQ…YALT. The 220-residue stretch at 505-724 folds into the ABC transporter 1 domain; sequence IEYDGAVQPS…GIDFESIMKT (220 aa). Residue 537-544 coordinates ATP; it reads GIVGSGKT. The segment at 729–756 is disordered; the sequence is IDENDQSSTSTTDKKSSTSSSSSELKKS. Positions 735–756 are enriched in low complexity; sequence SSTSTTDKKSSTSSSSSELKKS. 5 helical membrane-spanning segments follow: residues 813–833, 852–872, 941–961, 1036–1056, and 1061–1081; these read LFFL…LSDF, ILYY…RYFM, LFMM…LVVV, GIRL…SSLF, and GFSV…NWTI. The ABC transmembrane type-1 2 domain occupies 814-1093; the sequence is FFLTCALYFI…MTELEVKMNS (280 aa). The ABC transporter 2 domain occupies 1137–1371; sequence VEFKNVEIKY…EGSRFKKLVK (235 aa). 1171 to 1178 lines the ATP pocket; that stretch reads GRTGAGKS.

This sequence belongs to the ABC transporter superfamily. ABCC family. Conjugate transporter (TC 3.A.1.208) subfamily.

Its subcellular location is the membrane. The sequence is that of ABC transporter C family member 2 (abcC2) from Dictyostelium discoideum (Social amoeba).